Consider the following 235-residue polypeptide: Zein-alpha PMS1 (235 aa).

A signal peptide spans 1–21 (MAAKIFCLLMLLGLSASAATA).

Belongs to the zein family.

Zeins are major seed storage proteins. The sequence is that of Zein-alpha PMS1 (ZMPMS1) from Zea mays (Maize).